The sequence spans 804 residues: Serine/threonine-protein kinase ATG1 (804 aa).

Residues 12-308 (FTIGPEIGRG…FQEFFNDPLI (297 aa)) enclose the Protein kinase domain. Residues 18–26 (IGRGSFANV) and Lys-41 each bind ATP. The active-site Proton acceptor is Asp-158. 3 disordered regions span residues 339–364 (TSPP…ERAP), 395–415 (INKS…KGAR), and 455–506 (PSPH…MPIS). A compositionally biased stretch (basic and acidic residues) spans 404-415 (TVKDGQIKKGAR). Polar residues predominate over residues 462–495 (NEHSAANPSGPTETQTQRRFSPSSRTSSIGSNRR).

Belongs to the protein kinase superfamily. Ser/Thr protein kinase family. APG1/unc-51/ULK1 subfamily. Homodimer. Forms a ternary complex with ATG13 and ATG17.

The protein resides in the cytoplasm. The protein localises to the preautophagosomal structure membrane. It catalyses the reaction L-seryl-[protein] + ATP = O-phospho-L-seryl-[protein] + ADP + H(+). It carries out the reaction L-threonyl-[protein] + ATP = O-phospho-L-threonyl-[protein] + ADP + H(+). In terms of biological role, serine/threonine protein kinase involved in the cytoplasm to vacuole transport (Cvt) and found to be essential in autophagy, where it is required for the formation of autophagosomes. Involved in the clearance of protein aggregates which cannot be efficiently cleared by the proteasome. Required for selective autophagic degradation of the nucleus (nucleophagy) as well as for mitophagy which contributes to regulate mitochondrial quantity and quality by eliminating the mitochondria to a basal level to fulfill cellular energy requirements and preventing excess ROS production. Also involved in endoplasmic reticulum-specific autophagic process, in selective removal of ER-associated degradation (ERAD) substrates. Plays a key role in ATG9 and ATG23 cycling through the pre-autophagosomal structure and is necessary to promote ATG18 binding to ATG9 through phosphorylation of ATG9. Catalyzes phosphorylation of ATG4, decreasing the interaction between ATG4 and ATG8 and impairing deconjugation of PE-conjugated forms of ATG8. In Pichia angusta (Yeast), this protein is Serine/threonine-protein kinase ATG1.